The primary structure comprises 144 residues: Large ribosomal subunit protein uL15 (144 aa).

Residues 1-48 (MIKLECLQDPSPRKRRTKLLGRGPSSGHGKTSGRGHKGDGSRSGYKRR) are disordered.

This sequence belongs to the universal ribosomal protein uL15 family. In terms of assembly, part of the 50S ribosomal subunit.

In terms of biological role, binds to the 23S rRNA. The sequence is that of Large ribosomal subunit protein uL15 from Chlamydia trachomatis serovar L2 (strain ATCC VR-902B / DSM 19102 / 434/Bu).